Here is a 426-residue protein sequence, read N- to C-terminus: Cytochrome b-c1 complex subunit 2, mitochondrial (426 aa).

A mitochondrion-targeting transit peptide spans 1–30; that stretch reads MKSFTRNLRRFQTPRRNLHGISYTPKKVEG.

The protein belongs to the peptidase M16 family. UQCRC2/QCR2 subfamily. Component of the ubiquinol-cytochrome c oxidoreductase (cytochrome b-c1 complex, complex III, CIII), a multisubunit enzyme composed of 3 respiratory subunits cytochrome b, cytochrome c1 and Rieske protein, 2 core protein subunits, and additional low-molecular weight protein subunits. The complex exists as an obligatory dimer and forms supercomplexes (SCs) in the inner mitochondrial membrane with cytochrome c oxidase (complex IV, CIV).

Its subcellular location is the mitochondrion inner membrane. Functionally, component of the ubiquinol-cytochrome c oxidoreductase, a multisubunit transmembrane complex that is part of the mitochondrial electron transport chain which drives oxidative phosphorylation. The respiratory chain contains 3 multisubunit complexes succinate dehydrogenase (complex II, CII), ubiquinol-cytochrome c oxidoreductase (cytochrome b-c1 complex, complex III, CIII) and cytochrome c oxidase (complex IV, CIV), that cooperate to transfer electrons derived from NADH and succinate to molecular oxygen, creating an electrochemical gradient over the inner membrane that drives transmembrane transport and the ATP synthase. The cytochrome b-c1 complex catalyzes electron transfer from ubiquinol to cytochrome c, linking this redox reaction to translocation of protons across the mitochondrial inner membrane, with protons being carried across the membrane as hydrogens on the quinol. In the process called Q cycle, 2 protons are consumed from the matrix, 4 protons are released into the intermembrane space and 2 electrons are passed to cytochrome c. The sequence is that of Cytochrome b-c1 complex subunit 2, mitochondrial (qcr2) from Schizosaccharomyces pombe (strain 972 / ATCC 24843) (Fission yeast).